Consider the following 407-residue polypeptide: Serine/threonine transporter SstT (407 aa).

Helical transmembrane passes span 12 to 32 (GNLI…GISS), 42 to 62 (LGIL…FILI), 81 to 101 (IIIL…LANF), 141 to 161 (ALSS…GIAL), 179 to 199 (VLKI…GLVA), 218 to 238 (ILLV…IVFF), 245 to 267 (FPLI…SSAA), 288 to 308 (ISIP…IAIL), and 330 to 350 (IIAT…LLLI).

This sequence belongs to the dicarboxylate/amino acid:cation symporter (DAACS) (TC 2.A.23) family.

It is found in the cell inner membrane. The catalysed reaction is L-serine(in) + Na(+)(in) = L-serine(out) + Na(+)(out). It carries out the reaction L-threonine(in) + Na(+)(in) = L-threonine(out) + Na(+)(out). In terms of biological role, involved in the import of serine and threonine into the cell, with the concomitant import of sodium (symport system). The polypeptide is Serine/threonine transporter SstT (Campylobacter jejuni subsp. jejuni serotype O:2 (strain ATCC 700819 / NCTC 11168)).